The chain runs to 449 residues: Methylenetetrahydrofolate--tRNA-(uracil-5-)-methyltransferase TrmFO (449 aa).

Residue 10–15 (GGGLAG) participates in FAD binding.

It belongs to the MnmG family. TrmFO subfamily. Requires FAD as cofactor.

Its subcellular location is the cytoplasm. It carries out the reaction uridine(54) in tRNA + (6R)-5,10-methylene-5,6,7,8-tetrahydrofolate + NADH + H(+) = 5-methyluridine(54) in tRNA + (6S)-5,6,7,8-tetrahydrofolate + NAD(+). It catalyses the reaction uridine(54) in tRNA + (6R)-5,10-methylene-5,6,7,8-tetrahydrofolate + NADPH + H(+) = 5-methyluridine(54) in tRNA + (6S)-5,6,7,8-tetrahydrofolate + NADP(+). Its function is as follows. Catalyzes the folate-dependent formation of 5-methyl-uridine at position 54 (M-5-U54) in all tRNAs. The sequence is that of Methylenetetrahydrofolate--tRNA-(uracil-5-)-methyltransferase TrmFO from Sphingopyxis alaskensis (strain DSM 13593 / LMG 18877 / RB2256) (Sphingomonas alaskensis).